Reading from the N-terminus, the 333-residue chain is Chitinase-like protein 2 (333 aa).

Positions M1 to A27 are cleaved as a signal peptide. An intrachain disulfide couples C50 to C56. A glycan (N-linked (GlcNAc...) asparagine) is linked at N65. An intrachain disulfide couples C165 to C175. Residues N216 and N252 are each glycosylated (N-linked (GlcNAc...) asparagine). A disulfide bond links C275 and C313. Residues P307–S333 are disordered. The segment covering S320–S333 has biased composition (low complexity).

It belongs to the glycosyl hydrolase 19 family. As to expression, mostly expressed in stems, especially in xylem and interfascicular fibers.

It localises to the secreted. Its function is as follows. No chitinase activity. Required for proper cell wall biosynthesis in etiolated seedlings. Prevents lignin accumulation in hypocotyls. In Arabidopsis thaliana (Mouse-ear cress), this protein is Chitinase-like protein 2 (CTL2).